A 165-amino-acid polypeptide reads, in one-letter code: MMIIGIDPGLEFTGWGVVSSTNSQSVCLLDSGVISTRGISRESEKLYKIYVSLLSVLSLYKIDEASIEKVFINSNPRSSMSLCYARAASTISVMSRGIDIYEYSSTAIKKCITGSGMAPKEQVSFMVRSSLGIKQDVEINNHSSDAIAAALCHVYNTRNRNFALK.

Active-site residues include D7, E68, and H142. Mg(2+) contacts are provided by D7, E68, and H142.

This sequence belongs to the RuvC family. In terms of assembly, homodimer which binds Holliday junction (HJ) DNA. The HJ becomes 2-fold symmetrical on binding to RuvC with unstacked arms; it has a different conformation from HJ DNA in complex with RuvA. In the full resolvosome a probable DNA-RuvA(4)-RuvB(12)-RuvC(2) complex forms which resolves the HJ. It depends on Mg(2+) as a cofactor.

Its subcellular location is the cytoplasm. The enzyme catalyses Endonucleolytic cleavage at a junction such as a reciprocal single-stranded crossover between two homologous DNA duplexes (Holliday junction).. The RuvA-RuvB-RuvC complex processes Holliday junction (HJ) DNA during genetic recombination and DNA repair. Endonuclease that resolves HJ intermediates. Cleaves cruciform DNA by making single-stranded nicks across the HJ at symmetrical positions within the homologous arms, yielding a 5'-phosphate and a 3'-hydroxyl group; requires a central core of homology in the junction. The consensus cleavage sequence is 5'-(A/T)TT(C/G)-3'. Cleavage occurs on the 3'-side of the TT dinucleotide at the point of strand exchange. HJ branch migration catalyzed by RuvA-RuvB allows RuvC to scan DNA until it finds its consensus sequence, where it cleaves and resolves the cruciform DNA. The chain is Crossover junction endodeoxyribonuclease RuvC from Anaplasma marginale (strain Florida).